The primary structure comprises 71 residues: MSTKKTFEERLQELEAIVTRLENGDVPLEEAISEFQKGMVLSKDLQKTLQSAEKTLVKVMQADGTELEMDA.

It belongs to the XseB family. Heterooligomer composed of large and small subunits.

It localises to the cytoplasm. The enzyme catalyses Exonucleolytic cleavage in either 5'- to 3'- or 3'- to 5'-direction to yield nucleoside 5'-phosphates.. In terms of biological role, bidirectionally degrades single-stranded DNA into large acid-insoluble oligonucleotides, which are then degraded further into small acid-soluble oligonucleotides. This Streptococcus equi subsp. zooepidemicus (strain H70) protein is Exodeoxyribonuclease 7 small subunit.